A 259-amino-acid chain; its full sequence is Leucine-rich repeat-containing protein 3B (259 aa).

An N-terminal signal peptide occupies residues 1-33 (MNLVDLWLSRSLSMCLLLQSFVLMILCFHSASM). The region spanning 34–64 (CPKGCLCSSSGGLNVTCSNANLKEIPRDLPP) is the LRRNT domain. Residue N47 is glycosylated (N-linked (GlcNAc...) asparagine). LRR repeat units follow at residues 65 to 86 (ETVL…IFKD), 89 to 110 (QLRV…AFKG), and 114 to 135 (TLQT…AFNN). N94 carries N-linked (GlcNAc...) asparagine glycosylation. Positions 145-197 (NPWHCDCTLQQVLRSMASNHETAHNVICKTSVLDEHAGRPFLNAANDADLCNL) constitute an LRRCT domain. Residues 205-225 (AMLVTMFGWFTMVISYVVYYV) traverse the membrane as a helical segment.

The protein belongs to the LRRC3 family.

The protein localises to the membrane. This chain is Leucine-rich repeat-containing protein 3B (Lrrc3b), found in Mus musculus (Mouse).